A 327-amino-acid chain; its full sequence is MSHLAELVAQAKAAVESAQDVAALDSVRVEFLGKKGHLTLQMTSLRNLPAEERPAAGAVINQAKQEVQEALNARKAALESVALNARLAEETIDVSLPGRRMENGGLHPVTRTIERIESFFSELGFAVATGPEIEDDYHNFDALNIPAHHPARADHDTFWFDATRLLRTQTSGVQIRTMQQQQPPIRIIAPGRVYRNDYDQTHTPMFHQMEGLIVDKDISFTNLKGTLHDFLRNFFEQDLQIRFRPSYFPFTEPSAEVDVMGKNGKWLEVLGCGMVHPNVLRNVGIDPQVYSGFAFGMGMERLTMLRYGVTDLRAFFENDLRFLKQFK.

Mg(2+) is bound at residue glutamate 252.

Belongs to the class-II aminoacyl-tRNA synthetase family. Phe-tRNA synthetase alpha subunit type 1 subfamily. Tetramer of two alpha and two beta subunits. The cofactor is Mg(2+).

The protein resides in the cytoplasm. The catalysed reaction is tRNA(Phe) + L-phenylalanine + ATP = L-phenylalanyl-tRNA(Phe) + AMP + diphosphate + H(+). This Edwardsiella ictaluri (strain 93-146) protein is Phenylalanine--tRNA ligase alpha subunit.